Here is a 281-residue protein sequence, read N- to C-terminus: NADPH-dependent 7-cyano-7-deazaguanine reductase (281 aa).

81–83 (VES) is a substrate binding site. NADPH is bound at residue 83–84 (SK). The active-site Thioimide intermediate is the Cys-188. Residue Asp-195 is the Proton donor of the active site. Position 227–228 (227–228 (HE)) interacts with substrate. 256–257 (RG) is a binding site for NADPH. Positions 261–281 (INPLRTSHPQGLPRNMRTARQ) are disordered.

Belongs to the GTP cyclohydrolase I family. QueF type 2 subfamily. Homodimer.

It localises to the cytoplasm. The catalysed reaction is 7-aminomethyl-7-carbaguanine + 2 NADP(+) = 7-cyano-7-deazaguanine + 2 NADPH + 3 H(+). Its pathway is tRNA modification; tRNA-queuosine biosynthesis. In terms of biological role, catalyzes the NADPH-dependent reduction of 7-cyano-7-deazaguanine (preQ0) to 7-aminomethyl-7-deazaguanine (preQ1). This chain is NADPH-dependent 7-cyano-7-deazaguanine reductase, found in Verminephrobacter eiseniae (strain EF01-2).